We begin with the raw amino-acid sequence, 392 residues long: SH3 domain-binding protein 5-like (392 aa).

The segment at 1–57 (MADLKKAAGGRETPQGELRSEVVEDEGPRSPVAEEPGGSGSNSSETKLSPREEEELD) is disordered. At Thr-13 the chain carries Phosphothreonine. The span at 18-28 (LRSEVVEDEGP) shows a compositional bias: basic and acidic residues. Ser-30 and Ser-49 each carry phosphoserine. Coiled coils occupy residues 59-140 (RIQE…YERA) and 169-272 (WQEM…EQIH). Residues 275 to 332 (RRGLPPHPLGPRRSSPVGAEAGPEGIEDGDSGIEGAEGGGLEEGSSLGPGPGPDTDTL) are disordered. Residues 317-332 (EGSSLGPGPGPDTDTL) are compositionally biased toward low complexity. Residues Ser-342, Ser-349, Ser-357, Ser-361, and Ser-377 each carry the phosphoserine modification. The segment at 364–392 (GQELGAQSRGRRGSDIGVRGGRHQRSVSL) is disordered. The segment covering 383 to 392 (GGRHQRSVSL) has biased composition (basic residues).

Belongs to the SH3BP5 family.

Functionally, functions as a guanine nucleotide exchange factor (GEF) for RAB11A. This Mus musculus (Mouse) protein is SH3 domain-binding protein 5-like (Sh3bp5l).